The following is a 532-amino-acid chain: FRIGIDA-like protein 4b (532 aa).

This sequence belongs to the Frigida family. In terms of tissue distribution, expressed in leaves, shoot apex, flowers and during seed development.

This chain is FRIGIDA-like protein 4b (FRL4B), found in Arabidopsis thaliana (Mouse-ear cress).